The sequence spans 433 residues: MKELKHTKSEAMFKEAVKYIPGGVNSPVRAFGSVGLNPIFIDRAKGSKIYDVDGNEYIDYICSWGPLILGHSNEKLYEGIEETLRRGTSYGVPTEIEVKMAKLITEAYPSVDMVRMVNSGTEATMSALRVARGYTRRNKILKFEGCYHGHSDALLVKSGSGTITFGVPTSPGVPEGTVKDTLVCRYNDIEAVKRIFQEQGNEIAAVIVEPVSGNMGVVPGKQEFLQFLRDITKEYKSVLIFDEVITGFRLAYGGAQEVYGIEADMTCFGKIIGAGLPVGAYGGKREIMECVSPMGPVYQAGTLSGNPLAMHMGYKNLNILKENKDVYERLEEKAKRLEEGFNKNIKELGIKATVVRFKAMLCLFFAEGPLNNYDEVSKCDTEMYAKYFGEMLKRGVLIAPAQFEALFLSDAHTDEDIEYTIKANYEALKELKC.

Lys-270 bears the N6-(pyridoxal phosphate)lysine mark.

Belongs to the class-III pyridoxal-phosphate-dependent aminotransferase family. HemL subfamily. In terms of assembly, homodimer. Requires pyridoxal 5'-phosphate as cofactor.

It localises to the cytoplasm. It carries out the reaction (S)-4-amino-5-oxopentanoate = 5-aminolevulinate. It functions in the pathway porphyrin-containing compound metabolism; protoporphyrin-IX biosynthesis; 5-aminolevulinate from L-glutamyl-tRNA(Glu): step 2/2. The sequence is that of Glutamate-1-semialdehyde 2,1-aminomutase from Clostridium novyi (strain NT).